The sequence spans 894 residues: MKSIQTPSKSHTNTKETPVMSQEETKGYNPREIEESYYKIWETRGYFEVEGNAQIQKPNQNFAVMLPPPNVTGSLHIGHALNHTLIDIMTRYKRMDGYKTLWQPGTDHAGIATQNVVEKRLLSKGIKKEELGREAFLEKVWEWREESGGTILSQMRKLGTSPAWSRTRFTMDEGLKNSVARAFVKLYEEGYIIRGNYMVNWCTHDGALSDIEVEYDANKGKLYHLRYFFKDSSDYIVVATTRPETFFGDTAVMVHPEDERYAHLIGQTLVLPLIGREIQIIADSYVDREFGTGMVKVTPAHDPNDYEVGKRHDLEFITVFDKEGYLNHHAGEFEGLERLEAREAIVAKLQEKGYIEKIEEHENQVGKCYRCGNVVEPYISKQWFVKKEVAQKAIERINSGEAAFYPAQWKNNYNAWMKELRDWCISRQLWWGHQIPVYYCDCGHEWASETTPSHCPKCQGSQFHQDPDVLDTWFSSALWPFSTLGWGNGEAGKGSWWREEDLQEFYPNSLLITGFDILFFWVARMLMMGEHFLDNLPFKDIYLHALVRDEKGQKMSKSKGNVIDPLELIEKYGCDSTRFTLAILCAQGRDVRLSSQQLEISKNFTNKLYNAANFLLLNASSFKTLDEITPQTPLGRYMASRFSLCVEELRGALDGYRFNDGATVLYRFLWGEFCDWGIELSKANKEAINELGAIFREAMKLLHPYMPFISEHLYQKLGGARLEESTSIMILPYPKANWREEKIEMTFEVIMDAIISTRRLKATLELANQKIPVVFIKAPQGMDESLINTFIPRLAKVDSIELLSEKPAACVVDVGEKCEIYLSTAQLDLSPIISRLEKQQEKLQKEVDKLLGMLNNEKFVANAPQNVLEQNRVALKEAQTKLDKVKVELQGIKG.

Positions 1–22 are enriched in polar residues; the sequence is MKSIQTPSKSHTNTKETPVMSQ. The disordered stretch occupies residues 1–28; the sequence is MKSIQTPSKSHTNTKETPVMSQEETKGY. Residues 69 to 79 carry the 'HIGH' region motif; sequence PNVTGSLHIGH. A 'KMSKS' region motif is present at residues 554–558; sequence KMSKS. Lysine 557 contacts ATP. Positions 832–894 form a coiled coil; it reads IISRLEKQQE…VKVELQGIKG (63 aa).

Belongs to the class-I aminoacyl-tRNA synthetase family. ValS type 1 subfamily. As to quaternary structure, monomer.

It is found in the cytoplasm. It carries out the reaction tRNA(Val) + L-valine + ATP = L-valyl-tRNA(Val) + AMP + diphosphate. Catalyzes the attachment of valine to tRNA(Val). As ValRS can inadvertently accommodate and process structurally similar amino acids such as threonine, to avoid such errors, it has a 'posttransfer' editing activity that hydrolyzes mischarged Thr-tRNA(Val) in a tRNA-dependent manner. The protein is Valine--tRNA ligase of Wolinella succinogenes (strain ATCC 29543 / DSM 1740 / CCUG 13145 / JCM 31913 / LMG 7466 / NCTC 11488 / FDC 602W) (Vibrio succinogenes).